We begin with the raw amino-acid sequence, 531 residues long: CCA tRNA nucleotidyltransferase, mitochondrial (531 aa).

This sequence belongs to the tRNA nucleotidyltransferase/poly(A) polymerase family.

Its subcellular location is the mitochondrion. It localises to the cytoplasm. The protein localises to the nucleus. The enzyme catalyses a tRNA precursor + 2 CTP + ATP = a tRNA with a 3' CCA end + 3 diphosphate. In terms of biological role, nucleotidyltransferase that catalyzes the addition and repair of the essential 3'-terminal CCA sequence in tRNAs, which is necessary for the attachment of amino acids to the 3' terminus of tRNA molecules, using CTP and ATP as substrates. tRNA 3'-terminal CCA addition is required both for tRNA processing and repair. Also involved in tRNA surveillance by mediating tandem CCA addition to generate a CCACCA at the 3' terminus of unstable tRNAs. While stable tRNAs receive only 3'-terminal CCA, unstable tRNAs are marked with CCACCA and rapidly degraded. The structural flexibility of RNA controls the choice between CCA versus CCACCA addition: following the first CCA addition cycle, nucleotide-binding to the active site triggers a clockwise screw motion, producing torque on the RNA. This ejects stable RNAs, whereas unstable RNAs are refolded while bound to the enzyme and subjected to a second CCA catalytic cycle. This is CCA tRNA nucleotidyltransferase, mitochondrial (CCA1) from Candida glabrata (strain ATCC 2001 / BCRC 20586 / JCM 3761 / NBRC 0622 / NRRL Y-65 / CBS 138) (Yeast).